The following is a 669-amino-acid chain: Dynamin-related protein 4C (669 aa).

Residues 1–21 form a disordered region; that stretch reads MVKKKVATKKNSPSLAIAKKK. The Dynamin-type G domain occupies 62 to 323; the sequence is GIHLPTIVVV…QSSMIARCLP (262 aa). Residues 72-79 are G1 motif; sequence GDQSSGKS. Residue 72–79 participates in GTP binding; the sequence is GDQSSGKS. The segment at 97 to 99 is G2 motif; it reads CTR. The tract at residues 171 to 174 is G3 motif; sequence DLPG. Residues 171–175 and 240–243 each bind GTP; these read DLPGI and TKAD. A G4 motif region spans residues 240–243; the sequence is TKAD. Glu273 is a region of interest (G5 motif). Positions 575 to 669 constitute a GED domain; it reads AFDMKMRITS…AVAAIVDQNC (95 aa).

This sequence belongs to the TRAFAC class dynamin-like GTPase superfamily. Dynamin/Fzo/YdjA family.

It is found in the cytoplasm. It localises to the cytoskeleton. Its function is as follows. Putative microtubule-associated force-producing protein, able to bind and hydrolyze GTP. The polypeptide is Dynamin-related protein 4C (DRP4C) (Arabidopsis thaliana (Mouse-ear cress)).